The following is a 166-amino-acid chain: HTH-type transcriptional regulator PetP (166 aa).

Residues 17–152 form the HTH marR-type domain; sequence DEQLRKGIEA…FRQVLEAMMD (136 aa). The segment at residues 66-89 is a DNA-binding region (H-T-H motif); it reads VTTLISVLGVTKQSLNRVLRTLID.

Necessary for photosynthetic and respiratory growth. The sequence is that of HTH-type transcriptional regulator PetP (petP) from Rhodobacter capsulatus (strain ATCC BAA-309 / NBRC 16581 / SB1003).